A 96-amino-acid polypeptide reads, in one-letter code: Antitoxin ParD4 (96 aa).

It belongs to the ParD antitoxin family.

Its function is as follows. Antitoxin component of a type II toxin-antitoxin (TA) system. Neutralizes the effect of cognate toxin ParE4, but no other RelE or ParE toxin. This chain is Antitoxin ParD4 (parD4), found in Caulobacter vibrioides (strain ATCC 19089 / CIP 103742 / CB 15) (Caulobacter crescentus).